The following is a 460-amino-acid chain: Armadillo repeat-containing protein LFR (460 aa).

Over residues 1 to 10 the composition is skewed to low complexity; the sequence is MSHVRSAPAG. The segment at 1–32 is disordered; the sequence is MSHVRSAPAGKSGGGGGSTPAKRGRPFGSTTG. ARM repeat units lie at residues 225-267, 321-360, and 364-405; these read ENET…NLAP, NEPF…NVAE, and DFRL…SLVS.

As to quaternary structure, interacts with CHR719, SWI3A and SWI3C. As to expression, expressed at low levels in coleoptiles, leaf tongues, mature leaves and nodes during the vegetative phase. Highly expressed in reproductive tissues such as young panicles, early developing seeds, embryos and endosperms.

It is found in the nucleus. Its function is as follows. Plays critical roles in both embryo and endosperm development. Required for free nuclei division and cellularization in early endosperm development, by preventing premature cell death in the endosperm. Involved in the regulation of pattern formation and organ differentiation during embryogenesis, by regulating genes involved in the early stages of seed development. This chain is Armadillo repeat-containing protein LFR, found in Oryza sativa subsp. japonica (Rice).